The following is a 71-amino-acid chain: Large ribosomal subunit protein bL31 (71 aa).

Positions 16, 18, 37, and 40 each coordinate Zn(2+).

The protein belongs to the bacterial ribosomal protein bL31 family. Type A subfamily. As to quaternary structure, part of the 50S ribosomal subunit. The cofactor is Zn(2+).

Its function is as follows. Binds the 23S rRNA. This chain is Large ribosomal subunit protein bL31, found in Pseudomonas entomophila (strain L48).